The sequence spans 345 residues: Heat-inducible transcription repressor HrcA (345 aa).

It belongs to the HrcA family.

Its function is as follows. Negative regulator of class I heat shock genes (grpE-dnaK-dnaJ and groELS operons). Prevents heat-shock induction of these operons. This chain is Heat-inducible transcription repressor HrcA, found in Listeria welshimeri serovar 6b (strain ATCC 35897 / DSM 20650 / CCUG 15529 / CIP 8149 / NCTC 11857 / SLCC 5334 / V8).